We begin with the raw amino-acid sequence, 159 residues long: Ribosomal RNA large subunit methyltransferase H (159 aa).

S-adenosyl-L-methionine contacts are provided by residues Leu-76, Gly-108, and 127 to 132; that span reads FGLLTL.

This sequence belongs to the RNA methyltransferase RlmH family. Homodimer.

The protein localises to the cytoplasm. It carries out the reaction pseudouridine(1915) in 23S rRNA + S-adenosyl-L-methionine = N(3)-methylpseudouridine(1915) in 23S rRNA + S-adenosyl-L-homocysteine + H(+). Functionally, specifically methylates the pseudouridine at position 1915 (m3Psi1915) in 23S rRNA. This chain is Ribosomal RNA large subunit methyltransferase H, found in Streptococcus agalactiae serotype Ia (strain ATCC 27591 / A909 / CDC SS700).